We begin with the raw amino-acid sequence, 873 residues long: MKTMTTAEIRRAFLNYFSENGHKIVHSASLVPGNDPTLLFTNAGMVPFKELFIGTETRDYRRATSAQRCVRAGGKHNDLENVGYTARHHTFFEMLGNFSFGDYFKAEAIPFAWRFLTEVLQLPAEKLLVTVYHEDDEAYRIWQEKIGLPADRIIRIGDKAGKAKYESDNFWAMGDTGPCGPCTEIFYDHGAEIFGGRPGSADEDGDRFIEIWNIVFMQFERDAEGTMKPLPKPSIDTGMGLERIAAVMQGVHSNYDIDLFIHLIDAAAKAVGCKNEGQASLKVIADHIRATVFLMVDGVLPSNEGRGYVLRRIMRRAIRHGYKLGQQGLFFHKLVAALVAEMGEAYPEIIAEQARITETIRKEELRFAQTLTAGMQILEQDLATLKGTIISGETVFKLYDTYGFPVDLTNDIARERGLTLDEAGYEALMQAQRERAKASGTFRADKTYTVSGKTAFLAYQQEQTESTIEAIFVQEQAADTLDCGDEAVLVLNQSPFYGESGGQIGDSGVIYHQNGAFLVSDTQKQGDVLLHFGRLQRGVLSVGDTVCAEIDRARRAAIRRHHSATHLLHQALRMTLGTHVQQKGSLVDADKLRFDFSHDAALTAAEIGAVEQLINEQILRNQPVNISEMPYDQACAQGAMALFGEKYGDIVRVVKMGADDFSVELCGGTHVKQTGDLGLVKIIAQSAVAAGIRRVECVAGLAALRYCQQQETQLQRIAAVLKSDLEHSVEKIERLQQDTKTLEKTVQQLKRTVALGGTQETAESVVDIHGWKTMAVRRDDLDNAILRDTADQLRDKYQLDVVVIGSSDGEMARLVVSVAKSAAALKAGAIVQTLAAFIDGKGGGRPDFAQAGGKNIQGLDAALAALPQALPQK.

Residues His562, His566, Cys666, and His670 each coordinate Zn(2+).

This sequence belongs to the class-II aminoacyl-tRNA synthetase family. Zn(2+) is required as a cofactor.

It localises to the cytoplasm. It carries out the reaction tRNA(Ala) + L-alanine + ATP = L-alanyl-tRNA(Ala) + AMP + diphosphate. In terms of biological role, catalyzes the attachment of alanine to tRNA(Ala) in a two-step reaction: alanine is first activated by ATP to form Ala-AMP and then transferred to the acceptor end of tRNA(Ala). Also edits incorrectly charged Ser-tRNA(Ala) and Gly-tRNA(Ala) via its editing domain. This chain is Alanine--tRNA ligase, found in Dichelobacter nodosus (strain VCS1703A).